The following is a 358-amino-acid chain: C-X-C chemokine receptor type 4-A (358 aa).

The tract at residues 1–25 is important for chemokine binding and signaling; that stretch reads MDGFSGGIDINIFDGNSTENGSGDF. Residues 1–44 lie on the Extracellular side of the membrane; that stretch reads MDGFSGGIDINIFDGNSTENGSGDFEDFIEPCFMHENSDFNRIF. Residues Asn16 and Asn20 are each glycosylated (N-linked (GlcNAc...) asparagine). 2 disulfide bridges follow: Cys32–Cys281 and Cys113–Cys190. Residues 45–67 traverse the membrane as a helical segment; the sequence is LPTIYSFIFLLGIIGNGLVVVVM. The Cytoplasmic portion of the chain corresponds to 68 to 81; the sequence is GYQKKSRTMTDKYR. A helical transmembrane segment spans residues 82 to 103; it reads LHLSVADLLFVFTLPFWSVDAA. The tract at residues 98–101 is chemokine binding; it reads WSVD. Topologically, residues 104–114 are extracellular; that stretch reads IGWYFKEFLCK. Residues 115-134 form a helical membrane-spanning segment; it reads AVHVIYTVNLYSSVLILAFI. A chemokine binding region spans residues 117 to 121; sequence HVIYT. Topologically, residues 135–158 are cytoplasmic; it reads SLDRYLAIVHATNSQGSRKMLADK. An involved in dimerization; when bound to chemokine region spans residues 139–151; it reads YLAIVHATNSQGS. The helical transmembrane segment at 159 to 178 threads the bilayer; it reads VVYAGVWLPALLLTVPDLVF. Residues 179–202 are Extracellular-facing; that stretch reads ARVSDENGQFVCDRIYPIENRETW. The chemokine binding, important for signaling stretch occupies residues 190-194; that stretch reads CDRIY. Residues 203-223 form a helical membrane-spanning segment; it reads TVGFRFLHITVGLILPGLIIL. The Cytoplasmic portion of the chain corresponds to 224–248; it reads ICYCVIISKLSHSKGHQKRKALKTT. A helical transmembrane segment spans residues 249 to 268; the sequence is VILILAFFACWLPYYVCLTT. Residues 269-289 are Extracellular-facing; the sequence is DTFMLLGLVKGDCIWENTLHM. A helical membrane pass occupies residues 290-309; that stretch reads AISITEALAFFHCCLNPILY. The Cytoplasmic portion of the chain corresponds to 310–358; the sequence is AFLGAKFKTSAQNAFTSVSRGSSLKILSKKRAGLSSVSTESESSSFHSS. The disordered stretch occupies residues 338 to 358; it reads KKRAGLSSVSTESESSSFHSS. Low complexity predominate over residues 344–358; that stretch reads SSVSTESESSSFHSS.

This sequence belongs to the G-protein coupled receptor 1 family. Monomer. Can form dimers. Post-translationally, sulfation is required for efficient binding of cxcl12/sdf-1alpha and promotes its dimerization. In terms of processing, O- and N-glycosylated. Highly expressed in the embryonic nervous system including forebrain, hindbrain and sensory organs (including eye), and in neural crest cells. Also expressed in the dorsal lateral plate, the first site of definitive hematopoiesis in the embryo. Appears in migrating presumptive primordial germ cells (pPGCs) from stage 24. Expressed in the epidermis at stage 40. In the adult, highly expressed in the spleen with lower levels of expression in the liver and very low levels in kidney, heart, skin and brain.

The protein localises to the cell membrane. Its subcellular location is the cytoplasm. The protein resides in the nucleus. It localises to the early endosome. It is found in the late endosome. The protein localises to the lysosome. Receptor for the C-X-C chemokine cxcl12/sdf-1. Transduces a signal by increasing the intracellular level of calcium ions. Signaling with cxcl12/sdf-1 mediates the directional movement of mesodermal cells during gastrulation. May play a role in the migration of embryonic presumptive primordial germ cells (pPGCs). May also be involved in regulating the migration of hematopoietic stem cells into the larval liver. In Xenopus laevis (African clawed frog), this protein is C-X-C chemokine receptor type 4-A (cxcr4-a).